The sequence spans 103 residues: Carboxysome shell protein CcmK2 (103 aa).

The BMC domain maps to 4–90 (AVGMIETRGF…PHENLEYVLP (87 aa)).

Belongs to the bacterial microcompartments protein family. CcmK subfamily. In terms of assembly, homohexamer, might also make dodecamers. Interacts with full-length CcmM. Forms mixed heterohexamers of all possible stoichiometries with CcmK1, which might form dodecamers. Only very weak interactions with CcmK3 and CcmK4 were seen.

It is found in the carboxysome. In terms of biological role, one of the shell proteins of the carboxysome, a polyhedral inclusion where RuBisCO (ribulose bisphosphate carboxylase, rbcL-rbcS) is sequestered. The central pore probably regulates metabolite flux. Hexamers make sheets that form the facets of the polyhedral carboxysome. In Synechocystis sp. (strain ATCC 27184 / PCC 6803 / Kazusa), this protein is Carboxysome shell protein CcmK2.